The following is a 268-amino-acid chain: Tryptophan synthase alpha chain (268 aa).

Catalysis depends on proton acceptor residues glutamate 49 and aspartate 60.

This sequence belongs to the TrpA family. Tetramer of two alpha and two beta chains.

The enzyme catalyses (1S,2R)-1-C-(indol-3-yl)glycerol 3-phosphate + L-serine = D-glyceraldehyde 3-phosphate + L-tryptophan + H2O. It participates in amino-acid biosynthesis; L-tryptophan biosynthesis; L-tryptophan from chorismate: step 5/5. The alpha subunit is responsible for the aldol cleavage of indoleglycerol phosphate to indole and glyceraldehyde 3-phosphate. This Vibrio metschnikovii protein is Tryptophan synthase alpha chain.